The following is a 504-amino-acid chain: ATP synthase subunit beta (504 aa).

Position 181-188 (181-188 (GGAGVGKT)) interacts with ATP.

It belongs to the ATPase alpha/beta chains family. F-type ATPases have 2 components, CF(1) - the catalytic core - and CF(0) - the membrane proton channel. CF(1) has five subunits: alpha(3), beta(3), gamma(1), delta(1), epsilon(1). CF(0) has three main subunits: a(1), b(2) and c(9-12). The alpha and beta chains form an alternating ring which encloses part of the gamma chain. CF(1) is attached to CF(0) by a central stalk formed by the gamma and epsilon chains, while a peripheral stalk is formed by the delta and b chains.

Its subcellular location is the cell inner membrane. The catalysed reaction is ATP + H2O + 4 H(+)(in) = ADP + phosphate + 5 H(+)(out). Its function is as follows. Produces ATP from ADP in the presence of a proton gradient across the membrane. The catalytic sites are hosted primarily by the beta subunits. This Ehrlichia ruminantium (strain Welgevonden) protein is ATP synthase subunit beta.